The sequence spans 676 residues: Potassium voltage-gated channel subfamily KQT member 1 (676 aa).

Disordered regions lie at residues 1–28 (MAAA…RGSA) and 62–84 (APPA…PRPP). The Cytoplasmic segment spans residues 1–120 (MAAASSPPRA…YNFLERPTGW (120 aa)). Serine 27 carries the post-translational modification Phosphoserine; by PKA. Over residues 62-73 (APPASPAAPAAP) the composition is skewed to pro residues. A helical transmembrane segment spans residues 121-142 (KCFVYHFAVFLIVLVCLIFSVL). Residues 143-153 (STIEQYAALAT) are Extracellular-facing. The chain crosses the membrane as a helical span at residues 154–176 (GTLFWMEIVLVVFFGTEYVVRLW). Over 177-192 (SAGCRSKYVGLWGRLR) the chain is Cytoplasmic. Residues 193–218 (FARKPISIIDLIVVVASMVVLCVGSK) form a helical membrane-spanning segment. Residues 219–226 (GQVFATSA) lie on the Extracellular side of the membrane. A helical; Voltage-sensor membrane pass occupies residues 227 to 242 (IRGIRFLQILRMLHVD). The interval 238-246 (MLHVDRQGG) is interaction with KCNE3. The Cytoplasmic portion of the chain corresponds to 243-260 (RQGGTWRLLGSVVFIHRQ). A 1,2-diacyl-sn-glycero-3-phospho-(1D-myo-inositol-4,5-bisphosphate) is bound at residue glutamine 244. The chain crosses the membrane as a helical span at residues 261 to 283 (ELITTLYIGFLGLIFSSYFVYLA). Over 284–299 (EKDAVNESGRVEFGSY) the chain is Extracellular. N-linked (GlcNAc...) asparagine glycosylation is present at asparagine 289. Residues 300-320 (ADALWWGVVTVTTIGYGDKVP) constitute an intramembrane region (pore-forming). Topologically, residues 321–322 (QT) are extracellular. A helical membrane pass occupies residues 323–348 (WVGKTIASCFSVFAISFFALPAGILG). Residues 349–676 (SGFALKVQQK…VPRRGPDEGS (328 aa)) lie on the Cytoplasmic side of the membrane. An interaction with CALM region spans residues 370–382 (AAASLIQTAWRCY). A phosphoserine mark is found at serine 407 and serine 409. The segment at 515–529 (KVIRRMQYFVAKKKF) is interaction with CALM; calcium-dependent. The interaction with KCNE1 C-terminus stretch occupies residues 535–572 (PYDVRDVIEQYSQGHLNLMVRIKELQRRLDQSIGKPSL). A coiled-coil region spans residues 585–621 (SNTIGARLNRVEDKVTQLDQRLALITDMLHQLLSLHG). The interval 588-616 (IGARLNRVEDKVTQLDQRLALITDMLHQL) is interaction with AKAP9. The segment at 589 to 620 (GARLNRVEDKVTQLDQRLALITDMLHQLLSLH) is C-terminal assembly domain (tetramerization). The disordered stretch occupies residues 620–676 (HGGSTPGSGGPPREGGAHITQPCGSGGSVDPELFLPSNTLPTYEQLTVPRRGPDEGS). The span at 623-632 (STPGSGGPPR) shows a compositional bias: gly residues. Over residues 655-664 (PSNTLPTYEQ) the composition is skewed to polar residues.

Belongs to the potassium channel family. KQT (TC 1.A.1.15) subfamily. Kv7.1/KCNQ1 sub-subfamily. As to quaternary structure, tetramer. Heterotetramer with KCNE1; targets to the membrane raft. Interacts (via C-terminus) with calmodulin; forms a heterooctameric structure (with 4:4 KCNQ1:CALM stoichiometry); the interaction is calcium-independent, constitutive, participates in the proper assembly of a functional channel and also acts a calcium sensor. KCNQ1 channels interact more strongly with Ca(2+)-CALM than with apoCALM. Interacts with AKAP9; targets protein kinase A (PKA) catalytic and regulatory subunits and protein phosphatase 1 (PP1) to the KCNQ1-KCNE1 complex, allowing PKA-mediated phosphorylation and increase of delayed rectifier potassium channel activity. Interacts with KCNE2; forms a heterooligomer complex that targets to the membrane raft and leading to currents with an apparently instantaneous activation, a rapid deactivation process and a linear current-voltage relationship and decreases the amplitude of the outward current. Interacts with AP2M1; mediates estrogen-induced internalization via clathrin-coated vesicles. Interacts with NEDD4L; promotes internalization and decreases I(Ks) currents. Interacts with USP2; counteracts the NEDD4L-specific down-regulation of I(Ks) and restore plasma membrane localization. Heterotetramer with KCNQ5; has a voltage-gated potassium channel activity. Interacts with KCNE3; four KCNE3 molecules are bound to one KCNQ1 tetramer (4:4 KCNQ1:KCNE3 stoichiometry); alters membrane raft localization; affects KCNQ1 structure and gating properties. Interacts with KCNE4; impairs KCNQ1 localization in lipid rafts and inhibits voltage-gated potassium channel activity. Interacts with KCNE5; impairs KCNQ1 localization in lipid rafts and only conducts current upon strong and continued depolarization. Interacts with SLC5A3; forms coregulatory channel-transporter complexes that modulate Na(+)-coupled myo-inositol influx through the transporter. Phosphorylation at Ser-27 by PKA; increases delayed rectifier potassium channel activity of the KCNQ1-KCNE1 complex through a macromolecular complex that includes PKA, PP1, and the targeting protein AKAP9. Post-translationally, ubiquitinated by NEDD4L; promotes internalization. The ubiquitinylated form is internalized through a clathrin-mediated endocytosis by interacting with AP2M1 and is recycled back to the cell membrane via RAB4A and RAB11A. In terms of processing, deubiquitinated by USP2; counteracts the NEDD4L-specific down-regulation of I(Ks) and restores the membrane localization. As to expression, abundantly expressed in heart, pancreas, prostate, kidney, small intestine and peripheral blood leukocytes. Less abundant in placenta, lung, spleen, colon, thymus, testis and ovaries.

Its subcellular location is the cell membrane. It is found in the cytoplasmic vesicle membrane. The protein resides in the early endosome. The protein localises to the membrane raft. It localises to the endoplasmic reticulum. Its subcellular location is the basolateral cell membrane. It is found in the apical cell membrane. The catalysed reaction is K(+)(in) = K(+)(out). Its activity is regulated as follows. PIP2 molecule is essential to activate KCNQ channels by inducing the coupling of the voltage-sensing domain (VSD) and the pore-forming domain (PD). Upon channel activation, PIP2 disrupts the VSD-calmodulin/CALM interactions, causing the release of CALM from the VSD which triggers the opening of the gate. Calcium potentiates KCNQ1 channel current through calcium-bound CALM. Calcium-bound CALM competes with PIP2 to stabilize the channel open state. Pore-forming subunit of the voltage-gated potassium (Kv) channel involved in the regulation of cardiomyocyte excitability and important in normal development and functions of myocardium, inner ear, stomach and colon. Associates with KCNE beta subunits that modulates current kinetics. Induces a voltage-dependent current by rapidly activating and slowly deactivating potassium-selective outward current. Also promotes a delayed voltage activated potassium current showing outward rectification characteristic. During beta-adrenergic receptor stimulation, participates in cardiac repolarization by associating with KCNE1 to form the I(Ks) cardiac potassium current that increases the amplitude and slows down the activation kinetics of outward potassium current I(Ks). Muscarinic agonist oxotremorine-M strongly suppresses KCNQ1/KCNE1 current. When associated with KCNE3, forms the potassium channel that is important for cyclic AMP-stimulated intestinal secretion of chloride ions. This interaction with KCNE3 is reduced by 17beta-estradiol, resulting in the reduction of currents. During conditions of increased substrate load, maintains the driving force for proximal tubular and intestinal sodium ions absorption, gastric acid secretion, and cAMP-induced jejunal chloride ions secretion. Allows the provision of potassium ions to the luminal membrane of the secretory canaliculus in the resting state as well as during stimulated acid secretion. When associated with KCNE2, forms a heterooligomer complex leading to currents with an apparently instantaneous activation, a rapid deactivation process and a linear current-voltage relationship and decreases the amplitude of the outward current. When associated with KCNE4, inhibits voltage-gated potassium channel activity. When associated with KCNE5, this complex only conducts current upon strong and continued depolarization. Also forms a heterotetramer with KCNQ5; has a voltage-gated potassium channel activity. Binds with phosphatidylinositol 4,5-bisphosphate. KCNQ1-KCNE2 channel associates with Na(+)-coupled myo-inositol symporter in the apical membrane of choroid plexus epithelium and regulates the myo-inositol gradient between blood and cerebrospinal fluid with an impact on neuron excitability. Its function is as follows. Non-functional alone but modulatory when coexpressed with the full-length isoform 1. In Homo sapiens (Human), this protein is Potassium voltage-gated channel subfamily KQT member 1.